A 636-amino-acid chain; its full sequence is TNFAIP3-interacting protein 1 (636 aa).

Residues glutamate 20–leucine 73 adopt a coiled-coil conformation. The segment covering glutamine 61–glutamate 71 has biased composition (basic and acidic residues). Disordered regions lie at residues glutamine 61–proline 151 and methionine 252–alanine 283. Serine 77 bears the Phosphoserine mark. The tract at residues serine 94–glutamine 412 is interaction with Nef. Polar residues predominate over residues glutamate 131–alanine 142. Residues serine 196–glutamate 258 are a coiled coil. Phosphoserine is present on serine 284. Residues valine 294–tyrosine 535 are a coiled coil. Residues aspartate 351 to leucine 367 form an interaction with Shigella flexneri ipah9.8 region. Serine 403 is modified (phosphoserine). Residues threonine 431–serine 588 are required for inhibitory activity of TNF-induced NF-kappa-B activation. Threonine 438 carries the phosphothreonine modification. Serine 442 carries the phosphoserine modification. Residues lysine 452–alanine 510 form a ubiquitin-binding domain (UBD) region. The Nuclear localization signal motif lies at glutamine 524–alanine 530. A Phosphotyrosine modification is found at tyrosine 552. An Asymmetric dimethylarginine modification is found at arginine 571. An Asymmetric dimethylarginine; alternate modification is found at arginine 599. The residue at position 599 (arginine 599) is an Omega-N-methylarginine; alternate. Residues glycine 603–glutamine 636 form a disordered region. Positions threonine 623–glutamine 636 are enriched in basic and acidic residues. Serine 627 is modified (phosphoserine).

As to quaternary structure, interacts with TNFAIP3 and IKBKG (polyubiquitinated); facilitates TNFAIP3-mediated de-ubiquitination of NEMO/IKBKG. Interacts with polyubiquitin. Interacts with MAPK1, SELPLG and PIK3CD. Interacts with IRAK1 (polyubiquitinated). Interacts with MYD88; the interaction is indicative for participation in an activated TLR-signaling complex. Interacts with HIV-1 matrix protein. Interacts with TAX1BP1. In terms of assembly, (Microbial infection) Interacts with Shigella flexneri ipah9.8; the interaction promotes polyubiquitination of IKBKG. Post-translationally, phosphorylation at Tyr-552 by SRC-family kinases recruits phosphoinositide-3-kinase (PI3K) PIK3CD:p85 heterodimer which results in integrin activation and leukocyte adhesion to activated endothelium during inflammation. Ubiquitous. Strongly expressed in peripheral blood lymphocytes, spleen and skeletal muscle, and is weakly expressed in the brain. In peripheral blood mononucleocytes, isoform 4 is mainly expressed and isoform 1 and isoform 7 are almost not expressed. Expression of isoform 1 and isoform 7 increases in leukemic cells.

The protein localises to the cytoplasm. The protein resides in the nucleus. In terms of biological role, inhibits NF-kappa-B activation and TNF-induced NF-kappa-B-dependent gene expression by regulating TAX1BP1 and A20/TNFAIP3-mediated deubiquitination of IKBKG; proposed to link A20/TNFAIP3 to ubiquitinated IKBKG. Involved in regulation of EGF-induced ERK1/ERK2 signaling pathway; blocks MAPK3/MAPK1 nuclear translocation and MAPK1-dependent transcription. Increases cell surface CD4(T4) antigen expression. Involved in the anti-inflammatory response of macrophages and positively regulates TLR-induced activation of CEBPB. Involved in the prevention of autoimmunity; this function implicates binding to polyubiquitin. Involved in leukocyte integrin activation during inflammation; this function is mediated by association with SELPLG and dependent on phosphorylation by SRC-family kinases. Interacts with HIV-1 matrix protein and is packaged into virions and overexpression can inhibit viral replication. May regulate matrix nuclear localization, both nuclear import of PIC (Preintegration complex) and export of GAG polyprotein and viral genomic RNA during virion production. In case of infection, promotes association of IKBKG with Shigella flexneri E3 ubiquitin-protein ligase ipah9.8 p which in turn promotes polyubiquitination of IKBKG leading to its proteasome-dependent degradation and thus is perturbing NF-kappa-B activation during bacterial infection. This is TNFAIP3-interacting protein 1 (TNIP1) from Homo sapiens (Human).